Reading from the N-terminus, the 510-residue chain is 2,3-bisphosphoglycerate-independent phosphoglycerate mutase (510 aa).

Residues aspartate 13 and serine 63 each contribute to the Mn(2+) site. Residue serine 63 is the Phosphoserine intermediate of the active site. Residues histidine 124, 154-155 (RD), arginine 186, arginine 192, 262-265 (RADR), and lysine 334 contribute to the substrate site. The Mn(2+) site is built by aspartate 401, histidine 405, aspartate 442, histidine 443, and histidine 461.

This sequence belongs to the BPG-independent phosphoglycerate mutase family. As to quaternary structure, monomer. Mn(2+) is required as a cofactor.

It carries out the reaction (2R)-2-phosphoglycerate = (2R)-3-phosphoglycerate. Its pathway is carbohydrate degradation; glycolysis; pyruvate from D-glyceraldehyde 3-phosphate: step 3/5. Its function is as follows. Catalyzes the interconversion of 2-phosphoglycerate and 3-phosphoglycerate. In Vibrio campbellii (strain ATCC BAA-1116), this protein is 2,3-bisphosphoglycerate-independent phosphoglycerate mutase.